The sequence spans 140 residues: Hexon-interlacing protein (140 aa).

The stretch at 100–127 (LTALLAQLDSLTRELNVVSQQLLDLRQQ) forms a coiled coil. Ser135 carries the post-translational modification Phosphoserine; by host.

It belongs to the adenoviridae hexon-interlacing protein family. As to quaternary structure, homotrimer. Interacts with hexon protein; this interaction tethers the hexons together. Self-interacts with adjacent proteins. Interacts with kinesin light chain KLC1; this interaction leads to capsid disruption at the nuclear pore complex during virus entry into host cell.

It is found in the virion. The protein resides in the host nucleus. Structural component of the virion that forms triskelion structures consisting of three molecules that stabilize three hexon trimers at the center of each icosahedral facet and fixes the peripentonal hexons. Dispensable for assembly. During virus entry, recruits the anterograde motor kinesin-1 to the capsid docked at the nuclear pore complex thereby subjecting the docked capsid to a pulling force. The resulting tension leads to capsid disruption, dispersion of capsid fragments toward cell periphery and eventually viral DNA entry into the host nucleus. This chain is Hexon-interlacing protein, found in Human adenovirus C serotype 2 (HAdV-2).